The chain runs to 311 residues: Aspartate carbamoyltransferase catalytic subunit (311 aa).

2 residues coordinate carbamoyl phosphate: R55 and T56. L-aspartate is bound at residue K85. R106, H135, and Q138 together coordinate carbamoyl phosphate. Residues R168 and R230 each contribute to the L-aspartate site. 2 residues coordinate carbamoyl phosphate: L268 and P269.

The protein belongs to the aspartate/ornithine carbamoyltransferase superfamily. ATCase family. As to quaternary structure, heterododecamer (2C3:3R2) of six catalytic PyrB chains organized as two trimers (C3), and six regulatory PyrI chains organized as three dimers (R2).

It catalyses the reaction carbamoyl phosphate + L-aspartate = N-carbamoyl-L-aspartate + phosphate + H(+). It participates in pyrimidine metabolism; UMP biosynthesis via de novo pathway; (S)-dihydroorotate from bicarbonate: step 2/3. Catalyzes the condensation of carbamoyl phosphate and aspartate to form carbamoyl aspartate and inorganic phosphate, the committed step in the de novo pyrimidine nucleotide biosynthesis pathway. The chain is Aspartate carbamoyltransferase catalytic subunit from Klebsiella pneumoniae subsp. pneumoniae (strain ATCC 700721 / MGH 78578).